The sequence spans 501 residues: Galactokinase (501 aa).

Alpha-D-galactose-binding residues include Arg54, Glu60, His61, and Asp63. ATP-binding residues include Gly158, Gly160, Ser162, and Ser163. Asp207 serves as a coordination point for alpha-D-galactose. Asp207 functions as the Proton acceptor in the catalytic mechanism. Residues Ser250 and Lys252 each coordinate ATP. Alpha-D-galactose is bound at residue Tyr260.

Belongs to the GHMP kinase family. GalK subfamily.

The catalysed reaction is alpha-D-galactose + ATP = alpha-D-galactose 1-phosphate + ADP + H(+). It participates in carbohydrate metabolism; galactose metabolism. The sequence is that of Galactokinase (galK) from Dictyostelium discoideum (Social amoeba).